We begin with the raw amino-acid sequence, 707 residues long: MTKKLEHEYIAHTERPALTWDEQGQPYSTEYDDVYYSTTDALAETRFVFLDKNNLAARWPHLTHQQTFTVCETGFGAGLNFLATWQLWRSTRPSGRMHFISFEKHPLNSAQIAKALNRWPQFAALSEQLCALYPPSSAPGFHHITLDEGQVQLTLYFGDAKTGLEQLVLAHGAINKIENRSSCIGDKQQLVDAWYFDGFTPAKNPSIWQPCIFTLAAELSKSTTTFATFTSARSVRDAIENAGFKWQKVPGFGLKREMLFGTFEQHPFAQVDPNKAPTTAHRSYRKRNGVQHSWHLQTANSEHQPPKTAIVIGGGLAGAHAAHALALRGVNVTLLERAPNLANGASSNLQGLVYTRLSLSGNPLSRFNMAAQLYADRFYHSHNFYTTCGEASGVLHLATSNAIEKQLRNIGEQHASTDPNPIFNWVEQQDTEQAVGVSTSTGGLFIRNSGWLNPVQLCHALTNHPRITKLFNSDAAQLQQDAHGQWFALTNDGHKLASADITVICTARDAKHLAQTAYLPMRNIRGQVSHLSSHGLSQRLHASVCGAGYIAPAQSGIHCAGASFNLHENTLDLREEDHQFNIDNLASMSKSLTFNPPLTTLDGKVGFRATTPDYFPIVGPVPIRDEFCERFAGYRKRAATPIPQTGPYYRGLYVSVGYGSRGLAYTPLATESLCHSIFGELQPIATETLLHLHPARFLFRDLTRNRI.

Residues 1–264 (MTKKLEHEYI…KREMLFGTFE (264 aa)) form a tRNA (mnm(5)s(2)U34)-methyltransferase region. Residues 312 to 707 (IGGGLAGAHA…LFRDLTRNRI (396 aa)) are FAD-dependent cmnm(5)s(2)U34 oxidoreductase.

In the N-terminal section; belongs to the methyltransferase superfamily. tRNA (mnm(5)s(2)U34)-methyltransferase family. This sequence in the C-terminal section; belongs to the DAO family. Requires FAD as cofactor.

It localises to the cytoplasm. The enzyme catalyses 5-aminomethyl-2-thiouridine(34) in tRNA + S-adenosyl-L-methionine = 5-methylaminomethyl-2-thiouridine(34) in tRNA + S-adenosyl-L-homocysteine + H(+). Catalyzes the last two steps in the biosynthesis of 5-methylaminomethyl-2-thiouridine (mnm(5)s(2)U) at the wobble position (U34) in tRNA. Catalyzes the FAD-dependent demodification of cmnm(5)s(2)U34 to nm(5)s(2)U34, followed by the transfer of a methyl group from S-adenosyl-L-methionine to nm(5)s(2)U34, to form mnm(5)s(2)U34. This is tRNA 5-methylaminomethyl-2-thiouridine biosynthesis bifunctional protein MnmC from Saccharophagus degradans (strain 2-40 / ATCC 43961 / DSM 17024).